The chain runs to 213 residues: Protein nullo (213 aa).

Blastoderm. Throughout the entire cortex of the embryo although the distribution is not uniform.

Its function is as follows. Actin-myosin network stability during cellularization. Might be involved in increasing actin-actin interactions or membrane-to-cytoskeleton attachments. nullo together with Sry-a and bnk may provide auxiliary functions, by acting both to stabilize a large and dynamic microfilament structure and regulate its functions. This chain is Protein nullo (nullo), found in Drosophila melanogaster (Fruit fly).